The primary structure comprises 416 residues: MSTPLQGIKVLDFTGVQSGPSCTQMLAWFGADVIKIERPGVGDVTRHQLRDIPDIDALYFTMLNSNKRSIELNTKTAEGKEVMEKLIREADILVENFHPGAIDHMGFTWEHIQEINPRLIFGSIKGFDECSPYVNVKAYENVAQAAGGAASTTGFWDGPPLVSAAALGDSNTGMHLLIGLLAALLHREKTGRGQRVTMSMQDAVLNLCRVKLRDQQRLDKLGYLEEYPQYPNGTFGDAVPRGGNAGGGGQPGWILKCKGWETDPNAYIYFTIQEQNWENTCKAIGKPEWITDPAYSTAHARQPHIFDIFAEIEKYTVTIDKHEAVAYLTQFDIPCAPVLSMKEISLDPSLRQSGSVVEVEQPLRGKYLTVGCPMKFSAFTPDIKAAPLLGEHTAAVLQELGYSDDEIAAMKQNHAI.

CoA contacts are provided by residues 17-18 (QS), arginine 38, 72-75 (LNTK), 96-98 (NFH), histidine 104, and 137-140 (KAYE). Aspartate 169 (nucleophile) is an active-site residue. Residue 248–250 (GGQ) participates in substrate binding. CoA is bound at residue 273–275 (QEQ).

The protein belongs to the CoA-transferase III family. Frc subfamily. In terms of assembly, homodimer.

The catalysed reaction is formyl-CoA + oxalate = oxalyl-CoA + formate. It functions in the pathway metabolic intermediate degradation; oxalate degradation; CO(2) and formate from oxalate: step 1/2. In terms of biological role, involved in the catabolism of oxalate and in the adapatation to low pH via the induction of the oxalate-dependent acid tolerance response (ATR). Catalyzes the transfer of the CoA moiety from formyl-CoA to oxalate. The sequence is that of Formyl-CoA:oxalate CoA-transferase from Escherichia coli (strain ATCC 8739 / DSM 1576 / NBRC 3972 / NCIMB 8545 / WDCM 00012 / Crooks).